Reading from the N-terminus, the 398-residue chain is Putative isocitrate lyase subunit B (398 aa).

It belongs to the isocitrate lyase/PEP mutase superfamily. Isocitrate lyase family. The cofactor is Mg(2+).

The enzyme catalyses D-threo-isocitrate = glyoxylate + succinate. Its function is as follows. Together with AceAa, they could catalyze the formation of succinate and glyoxylate from isocitrate. The sequence is that of Putative isocitrate lyase subunit B (aceAb) from Mycobacterium tuberculosis (strain ATCC 25618 / H37Rv).